A 131-amino-acid chain; its full sequence is Large ribosomal subunit protein bL12 (131 aa).

Positions 100–125 (STPKPIKEGISKEDAEAAKKQLEDAG) are enriched in basic and acidic residues. Residues 100 to 131 (STPKPIKEGISKEDAEAAKKQLEDAGGKVSIK) are disordered.

This sequence belongs to the bacterial ribosomal protein bL12 family. In terms of assembly, homodimer. Part of the ribosomal stalk of the 50S ribosomal subunit. Forms a multimeric L10(L12)X complex, where L10 forms an elongated spine to which 2 to 4 L12 dimers bind in a sequential fashion. Binds GTP-bound translation factors.

Forms part of the ribosomal stalk which helps the ribosome interact with GTP-bound translation factors. Is thus essential for accurate translation. This Cyanothece sp. (strain PCC 7425 / ATCC 29141) protein is Large ribosomal subunit protein bL12.